The primary structure comprises 304 residues: MKEEETTYHVPVLLKESVDAMNISPDGTYVDVTFGGGGHSREILSRLGDGGRLLGFDQDEDAERNIVNDPHFTFVRSNFRYLHNFLRYHDIGEVDAILADLGVSSHHFDDSERGFSFRFDGKLDMRMNKRAGITAADVVNTYEEERLADIFYLYGELKNSRKLASVIVKARTGQKIETIGEFLEIIKPLFGREREKKELAKVFQALRIEVNQEMEALKEMLMAATEALKPGGRLVVITYHSLEDRMVKNIMKTGNVEGKATQDFFGNLQTPFRLVNNKVIVPDEDEITRNPRSRSAKLRIAEKK.

S-adenosyl-L-methionine contacts are provided by residues 37–39 (GGH), Asp57, Phe79, Asp100, and His107.

The protein belongs to the methyltransferase superfamily. RsmH family.

The protein localises to the cytoplasm. The enzyme catalyses cytidine(1402) in 16S rRNA + S-adenosyl-L-methionine = N(4)-methylcytidine(1402) in 16S rRNA + S-adenosyl-L-homocysteine + H(+). In terms of biological role, specifically methylates the N4 position of cytidine in position 1402 (C1402) of 16S rRNA. The polypeptide is Ribosomal RNA small subunit methyltransferase H (Bacteroides fragilis (strain YCH46)).